A 466-amino-acid polypeptide reads, in one-letter code: Ribulose bisphosphate carboxylase large chain (466 aa).

Lysine 4 carries the post-translational modification N6,N6,N6-trimethyllysine. Asparagine 113 and threonine 163 together coordinate substrate. Catalysis depends on lysine 165, which acts as the Proton acceptor. Lysine 167 is a substrate binding site. Mg(2+) is bound by residues lysine 191, aspartate 193, and glutamate 194. Lysine 191 carries the post-translational modification N6-carboxylysine. Histidine 284 acts as the Proton acceptor in catalysis. Substrate contacts are provided by arginine 285, histidine 317, and serine 369.

The protein belongs to the RuBisCO large chain family. Type I subfamily. As to quaternary structure, heterohexadecamer of 8 large chains and 8 small chains; disulfide-linked. The disulfide link is formed within the large subunit homodimers. It depends on Mg(2+) as a cofactor. In terms of processing, the disulfide bond which can form in the large chain dimeric partners within the hexadecamer appears to be associated with oxidative stress and protein turnover.

It is found in the plastid. The protein localises to the chloroplast. The enzyme catalyses 2 (2R)-3-phosphoglycerate + 2 H(+) = D-ribulose 1,5-bisphosphate + CO2 + H2O. It catalyses the reaction D-ribulose 1,5-bisphosphate + O2 = 2-phosphoglycolate + (2R)-3-phosphoglycerate + 2 H(+). Its function is as follows. RuBisCO catalyzes two reactions: the carboxylation of D-ribulose 1,5-bisphosphate, the primary event in carbon dioxide fixation, as well as the oxidative fragmentation of the pentose substrate in the photorespiration process. Both reactions occur simultaneously and in competition at the same active site. This chain is Ribulose bisphosphate carboxylase large chain, found in Ruttya fruticosa (African azalea).